The primary structure comprises 324 residues: Protease HtpX homolog (324 aa).

The next 2 membrane-spanning stretches (helical) occupy residues 7 to 24 and 29 to 46; these read ALLLAGLTALFMGVGYLI and GALIALVVAAAMNIFTYW. H130 is a Zn(2+) binding site. Residue E131 is part of the active site. H134 serves as a coordination point for Zn(2+). A run of 2 helical transmembrane segments spans residues 145-165 and 172-192; these read ITATIAGAISMVAQFGMFFGG and GPGLIGSLALMILAPLGAMLV. E201 provides a ligand contact to Zn(2+). Residues 288–305 are compositionally biased toward polar residues; sequence PASTFSRGAGTAASSGTP. The disordered stretch occupies residues 288–324; sequence PASTFSRGAGTAASSGTPRGTGRSPWGGQPRGRGPWG.

This sequence belongs to the peptidase M48B family. The cofactor is Zn(2+).

Its subcellular location is the cell inner membrane. The chain is Protease HtpX homolog from Rhodopseudomonas palustris (strain TIE-1).